Reading from the N-terminus, the 264-residue chain is Methionine aminopeptidase (264 aa).

H79 contacts substrate. Residues D97, D108, and H171 each coordinate a divalent metal cation. H178 lines the substrate pocket. Positions 204 and 235 each coordinate a divalent metal cation.

It belongs to the peptidase M24A family. Methionine aminopeptidase type 1 subfamily. In terms of assembly, monomer. The cofactor is Co(2+). Requires Zn(2+) as cofactor. It depends on Mn(2+) as a cofactor. Fe(2+) serves as cofactor.

The catalysed reaction is Release of N-terminal amino acids, preferentially methionine, from peptides and arylamides.. Its function is as follows. Removes the N-terminal methionine from nascent proteins. The N-terminal methionine is often cleaved when the second residue in the primary sequence is small and uncharged (Met-Ala-, Cys, Gly, Pro, Ser, Thr, or Val). Requires deformylation of the N(alpha)-formylated initiator methionine before it can be hydrolyzed. This is Methionine aminopeptidase from Salmonella typhi.